The following is a 61-amino-acid chain: Large ribosomal subunit protein bL32 (61 aa).

The protein belongs to the bacterial ribosomal protein bL32 family.

The protein is Large ribosomal subunit protein bL32 of Ehrlichia canis (strain Jake).